The primary structure comprises 290 residues: 4-diphosphocytidyl-2-C-methyl-D-erythritol kinase (290 aa).

The active site involves Lys-10. Residue 95 to 105 participates in ATP binding; sequence PVAAGLAGGSS. Asp-137 is a catalytic residue.

Belongs to the GHMP kinase family. IspE subfamily.

It carries out the reaction 4-CDP-2-C-methyl-D-erythritol + ATP = 4-CDP-2-C-methyl-D-erythritol 2-phosphate + ADP + H(+). The protein operates within isoprenoid biosynthesis; isopentenyl diphosphate biosynthesis via DXP pathway; isopentenyl diphosphate from 1-deoxy-D-xylulose 5-phosphate: step 3/6. Functionally, catalyzes the phosphorylation of the position 2 hydroxy group of 4-diphosphocytidyl-2C-methyl-D-erythritol. The sequence is that of 4-diphosphocytidyl-2-C-methyl-D-erythritol kinase from Geobacillus thermodenitrificans (strain NG80-2).